The primary structure comprises 807 residues: Glycerol-3-phosphate acyltransferase (807 aa).

Residues 305–310 (CHRSHM) carry the HXXXXD motif motif.

This sequence belongs to the GPAT/DAPAT family.

It is found in the cell inner membrane. It catalyses the reaction sn-glycerol 3-phosphate + an acyl-CoA = a 1-acyl-sn-glycero-3-phosphate + CoA. The protein operates within phospholipid metabolism; CDP-diacylglycerol biosynthesis; CDP-diacylglycerol from sn-glycerol 3-phosphate: step 1/3. In Shigella boydii serotype 18 (strain CDC 3083-94 / BS512), this protein is Glycerol-3-phosphate acyltransferase.